Reading from the N-terminus, the 240-residue chain is uncharacterized protein (240 aa).

The interval 216–240 (MKQSKNKPRIRQAVGATRQCRKPQA) is disordered.

This is an uncharacterized protein from Escherichia coli (strain K12).